The primary structure comprises 142 residues: Neuritin (142 aa).

The first 27 residues, 1–27, serve as a signal peptide directing secretion; it reads MGLKLNGRYISLILAVQIAYLVQAVRA. G116 carries GPI-anchor amidated glycine lipidation. Positions 117–142 are cleaved as a propeptide — removed in mature form; it reads AAGSLLPALSVLLVSLSAALATWFSF.

It belongs to the neuritin family. Component of the outer core of AMPAR complex. AMPAR complex consists of an inner core made of 4 pore-forming GluA/GRIA proteins (GRIA1, GRIA2, GRIA3 and GRIA4) and 4 major auxiliary subunits arranged in a twofold symmetry. One of the two pairs of distinct binding sites is occupied either by CNIH2, CNIH3 or CACNG2, CACNG3. The other harbors CACNG2, CACNG3, CACNG4, CACNG8 or GSG1L. This inner core of AMPAR complex is complemented by outer core constituents binding directly to the GluA/GRIA proteins at sites distinct from the interaction sites of the inner core constituents. Outer core constituents include at least PRRT1, PRRT2, CKAMP44/SHISA9, FRRS1L and NRN1. The proteins of the inner and outer core serve as a platform for other, more peripherally associated AMPAR constituents. Alone or in combination, these auxiliary subunits control the gating and pharmacology of the AMPAR complex and profoundly impact their biogenesis and protein processing. Expressed in the brain (at protein level).

The protein localises to the cell membrane. It localises to the synapse. In terms of biological role, promotes neurite outgrowth and especially branching of neuritic processes in primary hippocampal and cortical cells. This is Neuritin (Nrn1) from Mus musculus (Mouse).